We begin with the raw amino-acid sequence, 305 residues long: D-alanine--D-alanine ligase (305 aa).

Residues 107–299 form the ATP-grasp domain; the sequence is KKMLCYHGIA…FDELVERILA (193 aa). 134-186 contacts ATP; it reads PDYPLVVKPAREGSTIGISIVHDEQELAAGLEEAFRHDDLVLVEQFIAGAEVT. Residues D254, E266, and N268 each contribute to the Mg(2+) site.

Belongs to the D-alanine--D-alanine ligase family. Mg(2+) serves as cofactor. Mn(2+) is required as a cofactor.

The protein resides in the cytoplasm. It catalyses the reaction 2 D-alanine + ATP = D-alanyl-D-alanine + ADP + phosphate + H(+). It functions in the pathway cell wall biogenesis; peptidoglycan biosynthesis. Cell wall formation. In Syntrophotalea carbinolica (strain DSM 2380 / NBRC 103641 / GraBd1) (Pelobacter carbinolicus), this protein is D-alanine--D-alanine ligase.